A 413-amino-acid chain; its full sequence is Cardiolipin synthase B (413 aa).

2 PLD phosphodiesterase domains span residues 108–135 (VFRR…SAEH) and 285–312 (RRRP…DPLS). Active-site residues include H113, K115, D120, H290, K292, and D297. A disordered region spans residues 390 to 413 (VDPPAQPTMETQDRVETENTGVKP).

Belongs to the phospholipase D family. Cardiolipin synthase subfamily. ClsB sub-subfamily.

The protein localises to the cell membrane. It carries out the reaction 2 a 1,2-diacyl-sn-glycero-3-phospho-(1'-sn-glycerol) = a cardiolipin + glycerol. Its function is as follows. Catalyzes the phosphatidyl group transfer from one phosphatidylglycerol molecule to another to form cardiolipin (CL) (diphosphatidylglycerol) and glycerol. This is Cardiolipin synthase B from Escherichia coli O157:H7.